A 337-amino-acid polypeptide reads, in one-letter code: MVRPTRNRKPINYSQFEDSGNDSDDDFISSSTPVNKSKTVPKVLKQDKPKPNLKNLQKEEVLPTEPPKKRVALDDKVFQRGLEVALALSVKELPTLTNQVKKSKEKSTDKQGKEKTENTGKPPRVSNCSVASDDVEDLDKITEEGDASSVEGERKSPSQAKAPRRRAPSEGSDGSSANDTESESATGEGSESDPDFDESKESDEDFGVRRSKESKKKTVQKKPAGEKKERKSKPKCEASVTSVDPAPAAIKSGSPSLPQAVGLPSEATRKPAIMCSPSAESKRPKWVPPAASGSRNSSSNALAGTPAKSPSQSLRLGLSRLAPVKRLHPSATSSQVR.

2 disordered regions span residues 1–69 (MVRP…PPKK) and 88–337 (LSVK…SQVR). Phosphoserine is present on residues Ser-19 and Ser-23. Residues 28 to 38 (ISSSTPVNKSK) are compositionally biased toward polar residues. Residues 32 to 50 (TPVNKSKTVPKVLKQDKPK) are interaction with DNA. Positions 44–69 (LKQDKPKPNLKNLQKEEVLPTEPPKK) are enriched in basic and acidic residues. A phosphoserine mark is found at Ser-103 and Ser-107. Residues 105–118 (EKSTDKQGKEKTEN) are compositionally biased toward basic and acidic residues. The short motif at 138 to 143 (LDKITE) is the SIM motif element. Residues 190 to 205 (SESDPDFDESKESDED) are compositionally biased toward acidic residues. Residues 225-286 (GEKKERKSKP…PSAESKRPKW (62 aa)) form an interaction with DNA region. Lys-251 is covalently cross-linked (Glycyl lysine isopeptide (Lys-Gly) (interchain with G-Cter in SUMO; alternate)). Lys-251 participates in a covalent cross-link: Glycyl lysine isopeptide (Lys-Gly) (interchain with G-Cter in ubiquitin; alternate). The WVPP motif motif lies at 286-289 (WVPP). Over residues 290 to 304 (AASGSRNSSSNALAG) the composition is skewed to low complexity. The interval 295–334 (RNSSSNALAGTPAKSPSQSLRLGLSRLAPVKRLHPSATSS) is interaction with RAD51. The residue at position 309 (Ser-309) is a Phosphoserine.

As to quaternary structure, monomer; elongated monodisperse monomer. Interacts (via C-terminal region) with RAD51; the interaction is direct. Interacts (via SIM motif) with WDR48/UAF1; WDR48/UAF1 and RAD51AP1 cooperate together to stimulate RAD51-mediated homologous recombination (HR). Interacts (via WVPP motif) with DMC1; the interaction is direct. Interacts with PALB2. Interacts with RAD52. Post-translationally, sumoylation with SUMO2/3 by NSMCE2/MMS21 promotes stabilization, possibly by preventing ubiquitination. Most abundantly expressed in testis. Also expressed in spleen, thymus and bone marrow. Not detected in heart, kidney or liver.

The protein resides in the chromosome. Its subcellular location is the nucleus. It localises to the telomere. Its function is as follows. Structure-specific DNA-binding protein involved in DNA repair by promoting RAD51-mediated homologous recombination. Acts by stimulating D-Loop formation by RAD51: specifically enhances joint molecule formation through its structure-specific DNA interaction and its interaction with RAD51. Binds single-stranded DNA (ssDNA), double-stranded DNA (dsDNA) and secondary DNA structures, such as D-loop structures: has a strong preference for branched-DNA structures that are obligatory intermediates during joint molecule formation. Cooperates with WDR48/UAF1 to stimulate RAD51-mediated homologous recombination: both WDR48/UAF1 and RAD51AP1 have coordinated role in DNA-binding during homologous recombination and DNA repair. WDR48/UAF1 and RAD51AP1 also have a coordinated role in DNA-binding to promote USP1-mediated deubiquitination of FANCD2. Also involved in meiosis by promoting DMC1-mediated homologous meiotic recombination. The sequence is that of RAD51-associated protein 1 from Mus musculus (Mouse).